The following is a 175-amino-acid chain: ATP-dependent protease subunit HslV (175 aa).

T2 is a catalytic residue. The Na(+) site is built by G158, C161, and T164.

Belongs to the peptidase T1B family. HslV subfamily. In terms of assembly, a double ring-shaped homohexamer of HslV is capped on each side by a ring-shaped HslU homohexamer. The assembly of the HslU/HslV complex is dependent on binding of ATP.

The protein localises to the cytoplasm. It catalyses the reaction ATP-dependent cleavage of peptide bonds with broad specificity.. With respect to regulation, allosterically activated by HslU binding. Its function is as follows. Protease subunit of a proteasome-like degradation complex believed to be a general protein degrading machinery. This is ATP-dependent protease subunit HslV from Haemophilus influenzae (strain ATCC 51907 / DSM 11121 / KW20 / Rd).